We begin with the raw amino-acid sequence, 391 residues long: Tyrosine recombinase XerC-like (391 aa).

Residues 64 to 148 (VTLGDLMHTW…FLKTFFNYAV (85 aa)) form the Core-binding (CB) domain. The Tyr recombinase domain maps to 175–384 (TEIETFSDEE…IPKQKTNAVE (210 aa)). Catalysis depends on residues Arg210, Lys244, His335, Arg338, and His361. The active-site O-(3'-phospho-DNA)-tyrosine intermediate is Tyr371.

The protein belongs to the 'phage' integrase family.

The protein localises to the cytoplasm. Site-specific tyrosine recombinase, which acts by catalyzing the cutting and rejoining of the recombining DNA molecules. The sequence is that of Tyrosine recombinase XerC-like from Caldanaerobacter subterraneus subsp. tengcongensis (strain DSM 15242 / JCM 11007 / NBRC 100824 / MB4) (Thermoanaerobacter tengcongensis).